A 177-amino-acid chain; its full sequence is Large ribosomal subunit protein uL6 (177 aa).

The protein belongs to the universal ribosomal protein uL6 family. Part of the 50S ribosomal subunit.

Its function is as follows. This protein binds to the 23S rRNA, and is important in its secondary structure. It is located near the subunit interface in the base of the L7/L12 stalk, and near the tRNA binding site of the peptidyltransferase center. The sequence is that of Large ribosomal subunit protein uL6 from Agrobacterium fabrum (strain C58 / ATCC 33970) (Agrobacterium tumefaciens (strain C58)).